The chain runs to 504 residues: Cytochrome P450 71D8 (504 aa).

Residue cysteine 444 participates in heme binding.

It belongs to the cytochrome P450 family. Heme is required as a cofactor.

The chain is Cytochrome P450 71D8 (CYP71D8) from Glycine max (Soybean).